Consider the following 24-residue polypeptide: Lantibiotic 107891 (24 aa).

Thr-2 is subject to (E)-2,3-didehydrobutyrine. The segment at residues 3 to 7 is a cross-link (lanthionine (Ser-Cys)); it reads SWSLC. Trp-4 is subject to 6'-chlorotryptophan. Ser-5 is subject to 2,3-didehydroalanine (Ser). Residues 8 to 11 constitute a cross-link (beta-methyllanthionine (Thr-Cys)); the sequence is TPGC. Cross-links (lanthionine (Ser-Cys)) lie at residues 13 to 20 and 18 to 23; these read SPGGGSNC and SNCSFC. Pro-14 carries the 3,4-dihydroxyproline; in form A1 modification. Pro-14 bears the 4-hydroxyproline; in form A2 mark. The segment at residues 21–24 is a cross-link (S-(2-aminovinyl)-D-cysteine (Ser-Cys)); that stretch reads SFCC.

The protein belongs to the type A lantibiotic family. In terms of processing, maturation of lantibiotics involves the enzymatic conversion of Thr, and Ser into dehydrated AA and the formation of thioether bonds with cysteine. The C-terminal lanthionine undergoes decarboxylation. This is followed by membrane translocation and cleavage of the modified precursor. Occurs in 2 forms, A1 contains 3,4-dihydroxyproline at Pro-14, A2 contains 4-hydroxyproline at Pro-14. The patent report does not provide the stereochemistry of the modified prolines. Post-translationally, the patent report does not describe whether the 2,3-didehydrobutyrine is the E- or Z-isomer. In several diagrams it is shown as the E-isomer.

Its function is as follows. Lanthionine-containing peptide antibiotic (lantibiotic) active on Gram-positive bacteria. The bactericidal activity of lantibiotics is based on depolarization of energized bacterial cytoplasmic membranes, initiated by the formation of aqueous transmembrane pores. This chain is Lantibiotic 107891, found in Microbispora sp. (strain 107891).